The following is a 212-amino-acid chain: Membrane-bound lytic murein transglycosylase E (212 aa).

This sequence belongs to the transglycosylase Slt family.

It carries out the reaction Exolytic cleavage of the (1-&gt;4)-beta-glycosidic linkage between N-acetylmuramic acid (MurNAc) and N-acetylglucosamine (GlcNAc) residues in peptidoglycan, from either the reducing or the non-reducing ends of the peptidoglycan chains, with concomitant formation of a 1,6-anhydrobond in the MurNAc residue.. In terms of biological role, murein-degrading enzyme. May play a role in recycling of muropeptides during cell elongation and/or cell division. The chain is Membrane-bound lytic murein transglycosylase E (mltE) from Buchnera aphidicola subsp. Baizongia pistaciae (strain Bp).